A 1127-amino-acid polypeptide reads, in one-letter code: Glutamate receptor-interacting protein 1 (1127 aa).

Residue Gln11 is the site of S-palmitoyl cysteine attachment. Residue Ser43 is modified to Phosphoserine. 6 consecutive PDZ domains span residues 53–136 (VVEL…EYEL), 150–238 (TVEV…EYDV), 252–336 (LVEV…LPHH), 471–560 (EVVL…EFDV), 572–657 (HVKL…RKDE), and 672–754 (TVEL…KKQT). Disordered stretches follow at residues 752–802 (KQTD…PSVD), 840–865 (KQRT…SNED), and 942–980 (MARS…GRKS). 2 stretches are compositionally biased toward polar residues: residues 840 to 856 (KQRT…SQTY) and 947 to 973 (LGRQ…NTLP). One can recognise a PDZ 7 domain in the interval 1003 to 1085 (KVTLYKDSGM…KLDLVISRNP (83 aa)). Positions 1108–1127 (FFQQPSHGGNLETREPTNTL) are disordered.

In terms of assembly, interacts with EFNB3, GRIA2, GRIA3, GRIPAP1/GRASP1, PPFIA1, PPFIA4, FRAS1, PTPRF, liprins-alpha and the C-terminal tail of PRLHR. Can form homomultimers or heteromultimers with GRIP2. Interacts with EFNB1, EPHA7, EPHB2, KIF5A, KIF5B and KIF5C. Forms a ternary complex with GRIA2 and CSPG4. Interacts with ATAD1 in an ATP-dependent manner. ATAD1-catalyzed ATP hydrolysis disrupts binding to ATAD1 and to GRIA2 and leads to AMPAR complex disassembly. Interacts with SLC30A9 and PLCD4. Interacts with BUD23. Forms a complex with NSG1, GRIA2 and STX12; controls the intracellular fate of AMPAR and the endosomal sorting of the GRIA2 subunit toward recycling and membrane targeting. Interacts with NSG1. Post-translationally, palmitoylation of isoform 2. In terms of tissue distribution, expressed in brain. Isoform 2 is the major isoform in brain. Expressed in oligodendrocyte lineage cells.

The protein localises to the membrane. It localises to the cytoplasmic vesicle. The protein resides in the perikaryon. Its subcellular location is the cell projection. It is found in the dendrite. The protein localises to the cytoplasm. It localises to the endomembrane system. The protein resides in the postsynaptic cell membrane. Its subcellular location is the postsynaptic density. It is found in the endoplasmic reticulum membrane. Its function is as follows. May play a role as a localized scaffold for the assembly of a multiprotein signaling complex and as mediator of the trafficking of its binding partners at specific subcellular location in neurons. Through complex formation with NSG1, GRIA2 and STX12 controls the intracellular fate of AMPAR and the endosomal sorting of the GRIA2 subunit toward recycling and membrane targeting. The sequence is that of Glutamate receptor-interacting protein 1 (Grip1) from Mus musculus (Mouse).